An 87-amino-acid chain; its full sequence is Tektin-2 (87 aa).

Positions 26–55 (VEEELLKEVEVIEATKKALQQRVSQAFQQL) form a coiled coil.

Belongs to the tektin family. As to quaternary structure, microtubule inner protein component of sperm flagellar doublet microtubules. May interact with CCDC172. Tyrosine phosphorylated. Post-translationally, ubiquitinated, leading to its degradation. Deubiquitinated by USP16, promoting its stability. Detected in sperm flagella (at protein level).

It is found in the cytoplasm. Its subcellular location is the cytoskeleton. The protein localises to the cilium axoneme. It localises to the flagellum axoneme. The protein resides in the microtubule organizing center. Microtubule inner protein (MIP) part of the dynein-decorated doublet microtubules (DMTs) in cilia and flagellar axoneme. Plays a key role in the assembly or attachment of the inner dynein arm to microtubules in sperm flagella and tracheal cilia. Forms filamentous polymers in the walls of ciliary and flagellar microtubules. The chain is Tektin-2 from Mesocricetus auratus (Golden hamster).